Reading from the N-terminus, the 482-residue chain is UDP-sulfoquinovose synthase, chloroplastic (482 aa).

The N-terminal 61 residues, 1 to 61 (MAHLLSTSCS…NNTQKLTVVR (61 aa)), are a transit peptide targeting the chloroplast. Residues 100–101 (YC), 120–124 (DNLVR), 163–164 (DI), R189, and N207 contribute to the NAD(+) site. A substrate-binding site is contributed by R189. T233 and Y270 together coordinate substrate. T233 is a catalytic residue. Y270 and K274 together coordinate NAD(+). Y270 functions as the Proton acceptor in the catalytic mechanism. K274 is an active-site residue. A substrate-binding site is contributed by Q297. Position 300 (V300) interacts with NAD(+). Substrate contacts are provided by residues 327 to 330 (ALNR), 342 to 344 (TVY), and 415 to 417 (RVE).

It belongs to the NAD(P)-dependent epimerase/dehydratase family. As to quaternary structure, homodimer. Interacts with FdGOGAT (via FMN-binding domain). NAD(+) is required as a cofactor. In terms of processing, the N-terminus is blocked.

The protein resides in the plastid. It localises to the chloroplast stroma. The enzyme catalyses sulfite + UDP-alpha-D-glucose + H(+) = UDP-alpha-D-6-sulfoquinovose + H2O. In terms of biological role, involved in the biosynthesis of sulfolipids found in thylakoid membranes. Converts UDP-glucose and sulfite to the sulfolipid head group precursor UDP-sulfoquinovose. The sulfite is delivered to the reaction center by the FMN-binding domain of FdGOGAT. In Spinacia oleracea (Spinach), this protein is UDP-sulfoquinovose synthase, chloroplastic (SQD1).